The primary structure comprises 213 residues: Thiamine-phosphate synthase (213 aa).

4-amino-2-methyl-5-(diphosphooxymethyl)pyrimidine contacts are provided by residues 40–44 and N75; that span reads QFREK. The Mg(2+) site is built by D76 and D95. 4-amino-2-methyl-5-(diphosphooxymethyl)pyrimidine is bound at residue S113. 139-141 is a 2-[(2R,5Z)-2-carboxy-4-methylthiazol-5(2H)-ylidene]ethyl phosphate binding site; sequence TPS. K142 serves as a coordination point for 4-amino-2-methyl-5-(diphosphooxymethyl)pyrimidine. 2-[(2R,5Z)-2-carboxy-4-methylthiazol-5(2H)-ylidene]ethyl phosphate is bound by residues G171 and 191 to 192; that span reads IS.

It belongs to the thiamine-phosphate synthase family. Mg(2+) serves as cofactor.

The enzyme catalyses 2-[(2R,5Z)-2-carboxy-4-methylthiazol-5(2H)-ylidene]ethyl phosphate + 4-amino-2-methyl-5-(diphosphooxymethyl)pyrimidine + 2 H(+) = thiamine phosphate + CO2 + diphosphate. The catalysed reaction is 2-(2-carboxy-4-methylthiazol-5-yl)ethyl phosphate + 4-amino-2-methyl-5-(diphosphooxymethyl)pyrimidine + 2 H(+) = thiamine phosphate + CO2 + diphosphate. It carries out the reaction 4-methyl-5-(2-phosphooxyethyl)-thiazole + 4-amino-2-methyl-5-(diphosphooxymethyl)pyrimidine + H(+) = thiamine phosphate + diphosphate. The protein operates within cofactor biosynthesis; thiamine diphosphate biosynthesis; thiamine phosphate from 4-amino-2-methyl-5-diphosphomethylpyrimidine and 4-methyl-5-(2-phosphoethyl)-thiazole: step 1/1. In terms of biological role, condenses 4-methyl-5-(beta-hydroxyethyl)thiazole monophosphate (THZ-P) and 2-methyl-4-amino-5-hydroxymethyl pyrimidine pyrophosphate (HMP-PP) to form thiamine monophosphate (TMP). This is Thiamine-phosphate synthase from Staphylococcus aureus (strain MSSA476).